The following is a 443-amino-acid chain: 26S proteasome regulatory subunit 4 homolog B (443 aa).

Disordered stretches follow at residues 1–55 (MGQG…LPTV) and 87–108 (RLKPQEEKAEEDRSKVDDLRGT). Composition is skewed to basic and acidic residues over residues 12 to 28 (QGDRKPDGGEKKEKKFE) and 87 to 106 (RLKPQEEKAEEDRSKVDDLR). Residue 229-236 (GEPGTGKT) coordinates ATP. Glycyl lysine isopeptide (Lys-Gly) (interchain with G-Cter in ubiquitin) cross-links involve residues lysine 296 and lysine 433.

Belongs to the AAA ATPase family. Component of the 19S regulatory particle (RP/PA700) base subcomplex of the 26S proteasome. The 26S proteasome is composed of a core protease (CP), known as the 20S proteasome, capped at one or both ends by the 19S regulatory particle (RP/PA700). The RP/PA700 complex is composed of at least 17 different subunits in two subcomplexes, the base and the lid, which form the portions proximal and distal to the 20S proteolytic core, respectively. In terms of tissue distribution, preferentially expressed in the root and shoot apical meristem.

The protein resides in the cytoplasm. It localises to the nucleus. Functionally, the 26S protease is involved in the ATP-dependent degradation of ubiquitinated proteins. The regulatory (or ATPase) complex confers ATP dependency and substrate specificity to the 26S complex. Acts redundantly with RPT2A in the regulation of gametogenesis. With RPT2A plays a critical role in 26S proteasome assembly. This Arabidopsis thaliana (Mouse-ear cress) protein is 26S proteasome regulatory subunit 4 homolog B.